We begin with the raw amino-acid sequence, 20 residues long: Pregnancy-associated glycoprotein 60H (20 aa).

A glycan (N-linked (GlcNAc...) asparagine) is linked at asparagine 4.

This sequence belongs to the peptidase A1 family. As to expression, chorionic epithelium (trophectoderm) and placental cotyledons.

It is found in the secreted. The protein localises to the extracellular space. This is Pregnancy-associated glycoprotein 60H from Bison bonasus (European bison).